The sequence spans 79 residues: Anti-insect Ac4 (79 aa).

The first 17 residues, 1-17 (MISLSLLLMIGVESVRD), serve as a signal peptide directing secretion. Positions 18–77 (GYIVDFKNCVYRCVPPCDGLCKKNGGKGGSCSFLIGSGLACWCNALPDNVPIKDPLHKCP) constitute an LCN-type CS-alpha/beta domain. 4 cysteine pairs are disulfide-bonded: cysteine 26/cysteine 76, cysteine 30/cysteine 48, cysteine 34/cysteine 58, and cysteine 38/cysteine 60.

It belongs to the long (4 C-C) scorpion toxin superfamily. Sodium channel inhibitor family. Alpha subfamily. In terms of tissue distribution, expressed by the venom gland.

It is found in the secreted. Its function is as follows. Alpha toxins bind voltage-independently at site-3 of sodium channels (Nav) and inhibit the inactivation of the activated channels, thereby blocking neuronal transmission. This protein is weakly toxic against insects (ED(50)&gt;2 ug per 100 mg of blowfly larvae), but is inactive against mammalian sodium channels (rNav1.2a, and rNav1.4). In Androctonus crassicauda (Arabian fat-tailed scorpion), this protein is Anti-insect Ac4.